A 305-amino-acid chain; its full sequence is Methionyl-tRNA formyltransferase (305 aa).

Serine 109–proline 112 is a binding site for (6S)-5,6,7,8-tetrahydrofolate.

It belongs to the Fmt family.

The enzyme catalyses L-methionyl-tRNA(fMet) + (6R)-10-formyltetrahydrofolate = N-formyl-L-methionyl-tRNA(fMet) + (6S)-5,6,7,8-tetrahydrofolate + H(+). Functionally, attaches a formyl group to the free amino group of methionyl-tRNA(fMet). The formyl group appears to play a dual role in the initiator identity of N-formylmethionyl-tRNA by promoting its recognition by IF2 and preventing the misappropriation of this tRNA by the elongation apparatus. This chain is Methionyl-tRNA formyltransferase, found in Roseobacter denitrificans (strain ATCC 33942 / OCh 114) (Erythrobacter sp. (strain OCh 114)).